A 273-amino-acid polypeptide reads, in one-letter code: WIMGHMVNAIAQIDEFVNLGANSIETDVSFDSSANPEYTYHGVPCDCGRTCTKWKHFNEFLKGLRKATTPGDSKYHEKLVLVVFDLKTGSLYDNQASDAGKKLAKSLLQNYWNNGNNGGRAYIVLSIPNLAHYKLIAGFKEALTSEGHPELMDKVGYDFSGNDDIGDVANAYKKAGVTGHVWQSDGITNCLLRGLDRVRKAVANRDSSNGYINKVYYWTVDKRQSTRDALDAGVDGTMTNYPDVIADVLNESAYKAKFRIASYDDNPWETFKN.

The active site involves histidine 5. Mg(2+) is bound by residues glutamate 25 and aspartate 27. Histidine 41 (nucleophile) is an active-site residue. 2 disulfides stabilise this stretch: cysteine 45-cysteine 51 and cysteine 47-cysteine 190. Mg(2+) is bound at residue aspartate 85. An N-linked (GlcNAc...) asparagine glycan is attached at asparagine 250.

This sequence belongs to the arthropod phospholipase D family. Class II subfamily. Mg(2+) is required as a cofactor. As to expression, expressed by the venom gland.

It localises to the secreted. The enzyme catalyses an N-(acyl)-sphingosylphosphocholine = an N-(acyl)-sphingosyl-1,3-cyclic phosphate + choline. It carries out the reaction an N-(acyl)-sphingosylphosphoethanolamine = an N-(acyl)-sphingosyl-1,3-cyclic phosphate + ethanolamine. It catalyses the reaction a 1-acyl-sn-glycero-3-phosphocholine = a 1-acyl-sn-glycero-2,3-cyclic phosphate + choline. The catalysed reaction is a 1-acyl-sn-glycero-3-phosphoethanolamine = a 1-acyl-sn-glycero-2,3-cyclic phosphate + ethanolamine. Functionally, dermonecrotic toxins cleave the phosphodiester linkage between the phosphate and headgroup of certain phospholipids (sphingolipid and lysolipid substrates), forming an alcohol (often choline) and a cyclic phosphate. This toxin acts on sphingomyelin (SM). It may also act on ceramide phosphoethanolamine (CPE), lysophosphatidylcholine (LPC) and lysophosphatidylethanolamine (LPE), but not on lysophosphatidylserine (LPS), and lysophosphatidylglycerol (LPG). It acts by transphosphatidylation, releasing exclusively cyclic phosphate products as second products. Induces dermonecrosis, hemolysis, increased vascular permeability, edema, inflammatory response, and platelet aggregation. In Loxosceles arizonica (Arizona brown spider), this protein is Dermonecrotic toxin LarSicTox-alphaIB1aiv.